A 167-amino-acid chain; its full sequence is Mediator of RNA polymerase II transcription subunit 10 (167 aa).

A compositionally biased stretch (gly residues) spans 141 to 158 (TGGRTVGGEGEGAGQGEG). The interval 141–167 (TGGRTVGGEGEGAGQGEGGEGRGEGGN) is disordered.

Belongs to the Mediator complex subunit 10 family. Component of the Mediator complex.

The protein localises to the nucleus. Component of the Mediator complex, a coactivator involved in the regulated transcription of nearly all RNA polymerase II-dependent genes. Mediator functions as a bridge to convey information from gene-specific regulatory proteins to the basal RNA polymerase II transcription machinery. Mediator is recruited to promoters by direct interactions with regulatory proteins and serves as a scaffold for the assembly of a functional preinitiation complex with RNA polymerase II and the general transcription factors. The polypeptide is Mediator of RNA polymerase II transcription subunit 10 (NUT2) (Chaetomium globosum (strain ATCC 6205 / CBS 148.51 / DSM 1962 / NBRC 6347 / NRRL 1970) (Soil fungus)).